The sequence spans 269 residues: Seven in absentia homolog 3 (269 aa).

The SIAH-type; degenerate zinc finger occupies 61-132 (GSFHPHHLSH…VVPHLRQIHR (72 aa)). Zn(2+) is bound by residues C107, C114, H126, and H131.

It belongs to the SINA (Seven in absentia) family.

It is found in the mitochondrion. In terms of biological role, negative regulator of PRKN translocation to damaged mitochondria. Acts probably by destabilizing PINK1 protein, hence inhibiting PRKN targeting to dysfunctional depolarized mitochondria. The polypeptide is Seven in absentia homolog 3 (SIAH3) (Homo sapiens (Human)).